Consider the following 334-residue polypeptide: Geranylgeranyl pyrophosphate synthase idtG (334 aa).

Residues Lys49, Arg52, and His81 each coordinate isopentenyl diphosphate. Residues Asp88 and Asp92 each contribute to the Mg(2+) site. Position 97 (Arg97) interacts with dimethylallyl diphosphate. Residue Arg98 participates in isopentenyl diphosphate binding. Dimethylallyl diphosphate is bound by residues Lys175, Thr176, and Gln209. Asp212 is a binding site for Mg(2+). Positions 216, 226, and 236 each coordinate dimethylallyl diphosphate.

The protein belongs to the FPP/GGPP synthase family. Requires Mg(2+) as cofactor.

It carries out the reaction isopentenyl diphosphate + dimethylallyl diphosphate = (2E)-geranyl diphosphate + diphosphate. The enzyme catalyses isopentenyl diphosphate + (2E)-geranyl diphosphate = (2E,6E)-farnesyl diphosphate + diphosphate. The catalysed reaction is isopentenyl diphosphate + (2E,6E)-farnesyl diphosphate = (2E,6E,10E)-geranylgeranyl diphosphate + diphosphate. It participates in secondary metabolite biosynthesis. In terms of biological role, geranylgeranyl pyrophosphate synthase; part of the gene cluster that mediates the biosynthesis of paspalitrems, indole-diterpene (IDT) mycotoxins that are potent tremorgens in mammals. The geranylgeranyl diphosphate (GGPP) synthase idtG is proposed to catalyze the first step in IDT biosynthesis via catalysis of a series of iterative condensations of isopentenyl diphosphate (IPP) with dimethylallyl diphosphate (DMAPP), geranyl diphosphate (GPP), and farnesyl diphosphate (FPP), to form GGPP. Condensation of indole-3-glycerol phosphate with GGPP by the prenyltransferase idtC then forms 3-geranylgeranylindole (3-GGI). Epoxidation of the two terminal alkenes of the geranylgeranyl moiety by the FAD-dependent monooxygenase idtM, and cyclization by the terpene cyclase idtB then leads to the production of paspaline. The cytochrome P450 monooxygenase idtP then catalyzes oxidative elimination of the pendant methyl group at C-12 of paspaline and generates the C-10 ketone to yield 13-desoxypaxilline. The cytochrome P450 monooxygenase idtQ may catalyze the C-13 oxidation of 13-desoxypaxilline to afford paxilline. Considering that both paspalicine and paxilline were detected in C.paspali, idtQ also catalyzes the formation of paspalinine from 13-desoxypaxilline via paspalicine as an intermediate. Finally, the alpha-prenyltransferase idtF prenylates paspalinine at the C-20 or the C-21 positions to yield paspalitrems A and C, respectively. The hydroxylation of paspalitrem A at C-32 by a still unknown oxidase affords paspalitrem B. The polypeptide is Geranylgeranyl pyrophosphate synthase idtG (Claviceps paspali (Rye ergot fungus)).